Here is a 241-residue protein sequence, read N- to C-terminus: Small ribosomal subunit protein uS3 (241 aa).

Residues 39-107 (IREILHKELK…DVVINIVEIR (69 aa)) enclose the KH type-2 domain. The tract at residues 217–241 (KRMAEGETGGGGDRGGRQRRDNAAV) is disordered. Basic and acidic residues predominate over residues 230–241 (RGGRQRRDNAAV).

It belongs to the universal ribosomal protein uS3 family. As to quaternary structure, part of the 30S ribosomal subunit. Forms a tight complex with proteins S10 and S14.

Binds the lower part of the 30S subunit head. Binds mRNA in the 70S ribosome, positioning it for translation. The sequence is that of Small ribosomal subunit protein uS3 from Bradyrhizobium diazoefficiens (strain JCM 10833 / BCRC 13528 / IAM 13628 / NBRC 14792 / USDA 110).